Here is a 274-residue protein sequence, read N- to C-terminus: Protein RecA (274 aa).

43–50 (GPESSGKT) contributes to the ATP binding site.

The protein belongs to the RecA family.

Its subcellular location is the cytoplasm. Can catalyze the hydrolysis of ATP in the presence of single-stranded DNA, the ATP-dependent uptake of single-stranded DNA by duplex DNA, and the ATP-dependent hybridization of homologous single-stranded DNAs. It interacts with LexA causing its activation and leading to its autocatalytic cleavage. The sequence is that of Protein RecA from Neisseria polysaccharea.